We begin with the raw amino-acid sequence, 493 residues long: Probable cytosol aminopeptidase (493 aa).

2 residues coordinate Mn(2+): lysine 260 and aspartate 265. Residue lysine 272 is part of the active site. Aspartate 284, aspartate 343, and glutamate 345 together coordinate Mn(2+). Residue arginine 347 is part of the active site.

The protein belongs to the peptidase M17 family. Requires Mn(2+) as cofactor.

It is found in the cytoplasm. The catalysed reaction is Release of an N-terminal amino acid, Xaa-|-Yaa-, in which Xaa is preferably Leu, but may be other amino acids including Pro although not Arg or Lys, and Yaa may be Pro. Amino acid amides and methyl esters are also readily hydrolyzed, but rates on arylamides are exceedingly low.. The enzyme catalyses Release of an N-terminal amino acid, preferentially leucine, but not glutamic or aspartic acids.. In terms of biological role, presumably involved in the processing and regular turnover of intracellular proteins. Catalyzes the removal of unsubstituted N-terminal amino acids from various peptides. This Nostoc punctiforme (strain ATCC 29133 / PCC 73102) protein is Probable cytosol aminopeptidase.